Consider the following 531-residue polypeptide: 5-(hydroxymethyl)furfural oxidase (531 aa).

Residues T15–A16, E36–A37, W68, L94, G98, N102–V105, V233, and W466 each bind FAD. Catalysis depends on H467, which acts as the Proton acceptor. Residues A501 and T512–N513 contribute to the FAD site.

It belongs to the GMC oxidoreductase family. Monomer. FAD is required as a cofactor.

It catalyses the reaction 5-hydroxymethylfurfural + 3 O2 + 2 H2O = 2,5-dicarboxyfuran + 3 H2O2 + 2 H(+). It carries out the reaction benzylthiol + O2 = benzothialdehyde + H2O2. Its function is as follows. Involved in the degradation and detoxification of 5-(hydroxymethyl)furfural (HMF) by mediating its oxidation to furan-2,5-dicarboxylate (FDCA), a biobased platform chemical for the production of polymers. Active with a wide range of aromatic and aliphatic primary alcohols and aldehydes: acts on alcohol groups and requires the spontaneous hydration of aldehyde groups for their oxidation. To a lesser extent, is also able to catalyze the oxidation of thiols that are structurally similar to its alcohol substrates, yielding the corresponding thiocarbonyls. The chain is 5-(hydroxymethyl)furfural oxidase from Methylovorus sp. (strain MP688).